Reading from the N-terminus, the 461-residue chain is Nicotianamine aminotransferase A (461 aa).

The tract at residues 1–29 (MVHQSNGHGEAAAAAANGKSNGHAAAANG) is disordered. Positions 11 to 29 (AAAAAANGKSNGHAAAANG) are enriched in low complexity. K289 bears the N6-(pyridoxal phosphate)lysine mark.

This sequence belongs to the class-I pyridoxal-phosphate-dependent aminotransferase family. Pyridoxal 5'-phosphate serves as cofactor. In terms of tissue distribution, expressed in roots, but not in leaves.

It carries out the reaction nicotianamine + 2-oxoglutarate = 3''-deamino-3''-oxonicotianamine + L-glutamate. Involved in biosynthesis of mugineic acid family phytosiderophores. The polypeptide is Nicotianamine aminotransferase A (Hordeum vulgare (Barley)).